The primary structure comprises 263 residues: Hydroxyacylglutathione hydrolase (263 aa).

Positions 55, 57, 59, 60, 117, 134, and 172 each coordinate Zn(2+).

This sequence belongs to the metallo-beta-lactamase superfamily. Glyoxalase II family. As to quaternary structure, monomer. Zn(2+) is required as a cofactor.

The enzyme catalyses an S-(2-hydroxyacyl)glutathione + H2O = a 2-hydroxy carboxylate + glutathione + H(+). The protein operates within secondary metabolite metabolism; methylglyoxal degradation; (R)-lactate from methylglyoxal: step 2/2. Thiolesterase that catalyzes the hydrolysis of S-D-lactoyl-glutathione to form glutathione and D-lactic acid. The sequence is that of Hydroxyacylglutathione hydrolase from Shewanella baltica (strain OS223).